The chain runs to 305 residues: Nuclear egress protein 1 (305 aa).

Positions 1–42 (MYDIAPRRSGSRPGPGRDKTRRRSRFSAAGNPGVERRASRKS) are disordered. Residues 105-224 (CLTLSGMGYY…YVIFPGTSAH (120 aa)) form a CCCH-type zinc finger.

It belongs to the herpesviridae NEC1 protein family. As to quaternary structure, forms a heterohexameric complex with NEC2. Interacts with capsid vertex specific component 2/CVC2; this interaction directs the capsid to the host inner nuclear membrane to initiate budding. Phosphorylated at serine residues in the N-terminus. This phosphorylation regulates the localization within the inner nuclear membrane.

The protein resides in the host nucleus inner membrane. Its function is as follows. Plays an essential role in virion nuclear egress, the first step of virion release from infected cell. Within the host nucleus, NEC1 interacts with the newly formed capsid through the vertexes and directs it to the inner nuclear membrane by associating with NEC2. Induces the budding of the capsid at the inner nuclear membrane as well as its envelopment into the perinuclear space. There, the NEC1/NEC2 complex promotes the fusion of the enveloped capsid with the outer nuclear membrane and the subsequent release of the viral capsid into the cytoplasm where it will reach the secondary budding sites in the host Golgi or trans-Golgi network. In Human herpesvirus 2 (strain HG52) (HHV-2), this protein is Nuclear egress protein 1.